The primary structure comprises 126 residues: CD59 glycoprotein (126 aa).

The first 22 residues, 1-22, serve as a signal peptide directing secretion; it reads MRARRGFILLLLLAVLCSTGVS. Positions 23 to 110 constitute a UPAR/Ly6 domain; sequence LRCYNCLDPV…NGAISLLGKT (88 aa). Intrachain disulfides connect cysteine 25–cysteine 48, cysteine 28–cysteine 35, cysteine 41–cysteine 61, cysteine 67–cysteine 85, and cysteine 86–cysteine 91. The N-linked (GlcNAc...) asparagine glycan is linked to asparagine 38. Asparagine 101 is lipidated: GPI-anchor amidated asparagine. A propeptide spans 102 to 126 (removed in mature form); it reads GAISLLGKTALLVTSVLAAILKPCF.

Interacts with T-cell surface antigen CD2. Post-translationally, N- and O-glycosylated.

It is found in the cell membrane. It localises to the secreted. Potent inhibitor of the complement membrane attack complex (MAC) action, which protects self-cells from damage during complement activation. Acts by binding to the beta-haipins of C8 (C8A and C8B) components of the assembling MAC, forming an intermolecular beta-sheet that prevents incorporation of the multiple copies of C9 required for complete formation of the osmolytic pore. This Rattus norvegicus (Rat) protein is CD59 glycoprotein.